A 412-amino-acid polypeptide reads, in one-letter code: Pentatricopeptide repeat-containing protein At3g60980, mitochondrial (412 aa).

A mitochondrion-targeting transit peptide spans 1-18; sequence MSLIGRLNLGRRFCTAVP. PPR repeat units lie at residues 69 to 104, 105 to 139, 143 to 178, 179 to 213, 230 to 264, 266 to 296, 305 to 339, 344 to 371, and 373 to 407; these read TTTICQSIIGGMLRDKRLKDAYDLYEFFFNQHNLRP, NSHCWNYIIESGFQQGLVNDALHFHHRCINSGQVH, SDDSFRILTKGLVHSGRLDQAEAFLRGRTVNRTTYP, DHVAYNNLIRGFLDLGNFKKANLVLGEFKRLFLIA, VAFLMATFMEYWFKQGKQVEAMECYNRCVLSNRLL, CAETGNALLKVLLKYGEKKNAWALYHELLDK, DSDTIKIMVDECFDMGWFSEAMETYKKARPKNDYL, IITRFCENRMLSEAESVFVDSLADDFGY, and DVNTYKTMIDAYVKAGRIHDAIKTSNKMIDATLKE.

Belongs to the PPR family. P subfamily.

Its subcellular location is the mitochondrion. In Arabidopsis thaliana (Mouse-ear cress), this protein is Pentatricopeptide repeat-containing protein At3g60980, mitochondrial.